The sequence spans 94 residues: Small ribosomal subunit protein uS19 (94 aa).

This sequence belongs to the universal ribosomal protein uS19 family.

In terms of biological role, protein S19 forms a complex with S13 that binds strongly to the 16S ribosomal RNA. This is Small ribosomal subunit protein uS19 from Pelotomaculum thermopropionicum (strain DSM 13744 / JCM 10971 / SI).